The chain runs to 322 residues: Ferric-anguibactin-binding protein FatB (322 aa).

A signal peptide spans 1-22; the sequence is MFKSTLNIAVAIVCSSLVTLTG. Cysteine 23 carries N-palmitoyl cysteine lipidation. Residue cysteine 23 is the site of S-diacylglycerol cysteine attachment. The 266-residue stretch at 57-322 folds into the Fe/B12 periplasmic-binding domain; that stretch reads RVAALDMNEV…IDDIIKGYQS (266 aa).

This sequence belongs to the bacterial solute-binding protein 8 family. In terms of assembly, part of an iron transport system composed of the outer membrane receptor FatA, the periplasmic binding protein FatB and the inner membrane proteins FatC and FatD.

The protein resides in the cell inner membrane. Involved in the uptake of iron in complex with the siderophore anguibactin. Binds ferric-anguibactin in the periplasm and mediates its transport into the cytoplasm. This Vibrio anguillarum (strain ATCC 68554 / 775) (Listonella anguillarum) protein is Ferric-anguibactin-binding protein FatB.